A 236-amino-acid chain; its full sequence is CBS domain-containing protein CBSX1, chloroplastic (236 aa).

Residues M1 to P53 constitute a chloroplast transit peptide. The tract at residues P47–N66 is disordered. An N-acetylserine modification is found at S54. CBS domains are found at residues M81 to E142 and M175 to S231.

It is found in the plastid. It localises to the chloroplast. The polypeptide is CBS domain-containing protein CBSX1, chloroplastic (CBSX1) (Arabidopsis thaliana (Mouse-ear cress)).